The primary structure comprises 309 residues: Pantothenate kinase (309 aa).

An ATP-binding site is contributed by 92–99 (GSVAVGKT).

It belongs to the prokaryotic pantothenate kinase family.

It localises to the cytoplasm. The enzyme catalyses (R)-pantothenate + ATP = (R)-4'-phosphopantothenate + ADP + H(+). It participates in cofactor biosynthesis; coenzyme A biosynthesis; CoA from (R)-pantothenate: step 1/5. This chain is Pantothenate kinase (coaA), found in Lactiplantibacillus plantarum (strain ATCC BAA-793 / NCIMB 8826 / WCFS1) (Lactobacillus plantarum).